An 87-amino-acid chain; its full sequence is Phosphoribosyl-ATP pyrophosphatase (87 aa).

Belongs to the PRA-PH family.

It localises to the cytoplasm. It carries out the reaction 1-(5-phospho-beta-D-ribosyl)-ATP + H2O = 1-(5-phospho-beta-D-ribosyl)-5'-AMP + diphosphate + H(+). The protein operates within amino-acid biosynthesis; L-histidine biosynthesis; L-histidine from 5-phospho-alpha-D-ribose 1-diphosphate: step 2/9. The chain is Phosphoribosyl-ATP pyrophosphatase from Kocuria rhizophila (strain ATCC 9341 / DSM 348 / NBRC 103217 / DC2201).